The primary structure comprises 507 residues: Steroid (22S)-hydroxylase (507 aa).

A helical membrane pass occupies residues 12–32 (LLFFLPYILLALLTFYTTTVA). Residue Cys444 participates in heme binding.

The protein belongs to the cytochrome P450 family. It depends on heme as a cofactor.

Its subcellular location is the membrane. It catalyses the reaction a C27-steroid + reduced [NADPH--hemoprotein reductase] + O2 = a (22S)-22-hydroxy C27-steroid + oxidized [NADPH--hemoprotein reductase] + H2O + H(+). The enzyme catalyses a C28-steroid + reduced [NADPH--hemoprotein reductase] + O2 = a (22S)-22-hydroxy C28-steroid + oxidized [NADPH--hemoprotein reductase] + H2O + H(+). The catalysed reaction is campesterol + reduced [NADPH--hemoprotein reductase] + O2 = (22S)-22-hydroxycampesterol + oxidized [NADPH--hemoprotein reductase] + H2O + H(+). It carries out the reaction campestanol + reduced [NADPH--hemoprotein reductase] + O2 = 6-deoxycathasterone + oxidized [NADPH--hemoprotein reductase] + H2O + H(+). Its pathway is plant hormone biosynthesis; brassinosteroid biosynthesis. Involved in reduction steps of the biosynthesis of plant campesterol-derivative steroids, ending to castasterone (CS) but missing brassinolide (BL). Catalyzes the conversion of campesterol (CR) to (22S)-22-hydroxycampesterol (22-OHCR, 22-hydroxyCR) and of campestanol (CN) to 6-deoxycathasterone (6-deoxoCT). The polypeptide is Steroid (22S)-hydroxylase (Brachypodium distachyon (Purple false brome)).